The following is a 70-amino-acid chain: MRIVLVGPPGAGKGTQAAFLARNLSIPHISTGDLFRANISKQTELGKLAKSYMDKGELVPDEVTIAMAKD.

10 to 15 contacts ATP; sequence GAGKGT. Residues 30–59 form an NMP region; the sequence is STGDLFRANISKQTELGKLAKSYMDKGELV. AMP-binding positions include Thr-31, Arg-36, and 57–59; that span reads ELV.

Belongs to the adenylate kinase family. In terms of assembly, monomer.

It localises to the cytoplasm. It catalyses the reaction AMP + ATP = 2 ADP. It functions in the pathway purine metabolism; AMP biosynthesis via salvage pathway; AMP from ADP: step 1/1. Its function is as follows. Catalyzes the reversible transfer of the terminal phosphate group between ATP and AMP. Plays an important role in cellular energy homeostasis and in adenine nucleotide metabolism. This Streptomyces scabiei protein is Adenylate kinase (adk).